We begin with the raw amino-acid sequence, 353 residues long: 3-deoxy-D-manno-octulosonic acid transferase (353 aa).

The Proton acceptor role is filled by E31. CMP is bound by residues P211–R212, F247–I249, and N273–E276.

It belongs to the glycosyltransferase group 1 family. Glycosyltransferase 30 subfamily. As to quaternary structure, can form homodimer, homotrimer and homotetramer.

The protein resides in the cell inner membrane. It carries out the reaction lipid IVA (E. coli) + CMP-3-deoxy-beta-D-manno-octulosonate = alpha-Kdo-(2-&gt;6)-lipid IVA (E. coli) + CMP + H(+). Its pathway is bacterial outer membrane biogenesis; LPS core biosynthesis. Functionally, involved in lipopolysaccharide (LPS) biosynthesis. Catalyzes the transfer of a single 3-deoxy-D-manno-octulosonate (Kdo) residue from CMP-Kdo to lipid IV(A), the tetraacyldisaccharide-1,4'-bisphosphate precursor of lipid A. Is strictly monofunctional, i.e. is capable of adding only a single Kdo residue to the acceptor lipid. This is 3-deoxy-D-manno-octulosonic acid transferase (kdtA) from Aquifex aeolicus (strain VF5).